The chain runs to 227 residues: Ribose-5-phosphate isomerase A (227 aa).

Substrate-binding positions include Thr26–Thr29, Asp82–Asp85, and Lys95–Gly98. Catalysis depends on Glu104, which acts as the Proton acceptor. Lys122 contributes to the substrate binding site.

The protein belongs to the ribose 5-phosphate isomerase family. In terms of assembly, homodimer.

The enzyme catalyses aldehydo-D-ribose 5-phosphate = D-ribulose 5-phosphate. Its pathway is carbohydrate degradation; pentose phosphate pathway; D-ribose 5-phosphate from D-ribulose 5-phosphate (non-oxidative stage): step 1/1. Catalyzes the reversible conversion of ribose-5-phosphate to ribulose 5-phosphate. This is Ribose-5-phosphate isomerase A from Streptococcus equi subsp. zooepidemicus (strain MGCS10565).